A 522-amino-acid chain; its full sequence is Protein nucleotidyltransferase YdiU (522 aa).

Residues G109, G111, R112, K132, D144, G145, R195, and R202 each coordinate ATP. D271 serves as the catalytic Proton acceptor. N272 and D281 together coordinate Mg(2+). D281 is an ATP binding site.

It belongs to the SELO family. The cofactor is Mg(2+). Mn(2+) serves as cofactor.

The enzyme catalyses L-seryl-[protein] + ATP = 3-O-(5'-adenylyl)-L-seryl-[protein] + diphosphate. It catalyses the reaction L-threonyl-[protein] + ATP = 3-O-(5'-adenylyl)-L-threonyl-[protein] + diphosphate. The catalysed reaction is L-tyrosyl-[protein] + ATP = O-(5'-adenylyl)-L-tyrosyl-[protein] + diphosphate. It carries out the reaction L-histidyl-[protein] + UTP = N(tele)-(5'-uridylyl)-L-histidyl-[protein] + diphosphate. The enzyme catalyses L-seryl-[protein] + UTP = O-(5'-uridylyl)-L-seryl-[protein] + diphosphate. It catalyses the reaction L-tyrosyl-[protein] + UTP = O-(5'-uridylyl)-L-tyrosyl-[protein] + diphosphate. Nucleotidyltransferase involved in the post-translational modification of proteins. It can catalyze the addition of adenosine monophosphate (AMP) or uridine monophosphate (UMP) to a protein, resulting in modifications known as AMPylation and UMPylation. This Burkholderia cenocepacia (strain HI2424) protein is Protein nucleotidyltransferase YdiU.